Here is a 543-residue protein sequence, read N- to C-terminus: ATP synthase subunit alpha (543 aa).

174-181 (GDRQTGKT) provides a ligand contact to ATP.

It belongs to the ATPase alpha/beta chains family. As to quaternary structure, F-type ATPases have 2 components, CF(1) - the catalytic core - and CF(0) - the membrane proton channel. CF(1) has five subunits: alpha(3), beta(3), gamma(1), delta(1), epsilon(1). CF(0) has three main subunits: a(1), b(2) and c(9-12). The alpha and beta chains form an alternating ring which encloses part of the gamma chain. CF(1) is attached to CF(0) by a central stalk formed by the gamma and epsilon chains, while a peripheral stalk is formed by the delta and b chains.

It localises to the cell membrane. The enzyme catalyses ATP + H2O + 4 H(+)(in) = ADP + phosphate + 5 H(+)(out). Its function is as follows. Produces ATP from ADP in the presence of a proton gradient across the membrane. The alpha chain is a regulatory subunit. The sequence is that of ATP synthase subunit alpha from Bifidobacterium longum subsp. infantis (strain ATCC 15697 / DSM 20088 / JCM 1222 / NCTC 11817 / S12).